A 160-amino-acid chain; its full sequence is Transcriptional regulator MraZ (160 aa).

SpoVT-AbrB domains follow at residues 5–51 and 80–123; these read TFEK…GKAL and MAKL…EREA.

This sequence belongs to the MraZ family. As to quaternary structure, forms oligomers.

The protein resides in the cytoplasm. Its subcellular location is the nucleoid. This chain is Transcriptional regulator MraZ, found in Phenylobacterium zucineum (strain HLK1).